We begin with the raw amino-acid sequence, 298 residues long: ADP/ATP translocase 2 (298 aa).

An N-acetylmethionine modification is found at Met1. Residues 1–7 lie on the Mitochondrial intermembrane side of the membrane; sequence MTDAAVS. Thr2 bears the N-acetylthreonine; in ADP/ATP translocase 2, N-terminally processed mark. One copy of the Solcar 1 repeat lies at 6–98; the sequence is VSFAKDFLAG…FAFKDKYKQI (93 aa). Ser7 carries the phosphoserine modification. The chain crosses the membrane as a helical span at residues 8–37; it reads FAKDFLAGGVAAAISKTAVAPIERVKLLLQ. Lys23 is modified (N6-malonyllysine). Over 38–74 the chain is Mitochondrial matrix; the sequence is VQHASKQITADKQYKGIIDCVVRIPKEQGVLSFWRGN. Lys43 carries the N6-succinyllysine modification. Residue Lys52 is modified to N6,N6,N6-trimethyllysine; alternate. N6,N6-dimethyllysine; alternate is present on Lys52. Lys52 bears the N6-methyllysine; alternate mark. The helical transmembrane segment at 75–99 threads the bilayer; it reads LANVIRYFPTQALNFAFKDKYKQIF. ADP is bound by residues Arg80 and Lys92. N6-malonyllysine occurs at positions 92 and 96. Over 100 to 109 the chain is Mitochondrial intermembrane; the sequence is LGGVDKRTQF. Position 105 is an N6-acetyllysine; alternate (Lys105). At Lys105 the chain carries N6-succinyllysine; alternate. Residues 110-130 form a helical membrane-spanning segment; that stretch reads WRYFAGNLASGGAAGATSLCF. Solcar repeat units lie at residues 111–201 and 212–297; these read RYFA…AKGM and ISWM…IKKF. Residues 131–178 are Mitochondrial matrix-facing; the sequence is VYPLDFARTRLAADVGKAGAEREFRGLGDCLVKIYKSDGIRGLYQGFN. Lys147 carries the post-translational modification N6-methyllysine; alternate. Lys147 bears the N6-acetyllysine; alternate mark. N6-succinyllysine; alternate is present on Lys147. Lys147 is modified (N6-malonyllysine; alternate). N6-acetyllysine is present on residues Lys163 and Lys166. The helical transmembrane segment at 179 to 199 threads the bilayer; it reads VSVQGIIIYRAAYFGIYDTAK. The Mitochondrial intermembrane portion of the chain corresponds to 200 to 210; that stretch reads GMLPDPKNTHI. A helical transmembrane segment spans residues 211 to 231; it reads FISWMIAQSVTAVAGLTSYPF. At 232 to 273 the chain is on the mitochondrial matrix side; the sequence is DTVRRRMMMQSGRKGTDIMYTGTLDCWRKIARDEGAKAFFKG. Position 235 (Arg235) interacts with ADP. The segment at 235 to 240 is important for transport activity; sequence RRRMMM. The Nucleotide carrier signature motif motif lies at 235–240; sequence RRRMMM. Lys268 is modified (N6-acetyllysine; alternate). Lys268 is modified (N6-succinyllysine; alternate). The chain crosses the membrane as a helical span at residues 274–291; that stretch reads AWSNVLRGMGGAFVLVLY. At 292-298 the chain is on the mitochondrial intermembrane side; that stretch reads DEIKKFT.

It belongs to the mitochondrial carrier (TC 2.A.29) family. In terms of assembly, monomer. Component of the MMXD complex, which includes CIAO1, ERCC2, CIAO2B, MMS19 and SLC25A5/ANT2. Interacts with AK4. Interacts with TIMM44; leading to inhibit the presequence translocase TIMM23, thereby promoting stabilization of PINK1. In terms of processing, trimethylated by ANTKMT at Lys-52.

It localises to the mitochondrion inner membrane. It is found in the membrane. It catalyses the reaction ADP(in) + ATP(out) = ADP(out) + ATP(in). It carries out the reaction H(+)(in) = H(+)(out). Its activity is regulated as follows. The matrix-open state (m-state) is inhibited by the membrane-permeable bongkrekic acid (BKA). The cytoplasmic-open state (c-state) is inhibited by the membrane-impermeable toxic inhibitor carboxyatractyloside (CATR). Proton transporter activity is inhibited by ADP:ATP antiporter activity. ADP:ATP antiporter that mediates import of ADP into the mitochondrial matrix for ATP synthesis, and export of ATP out to fuel the cell. Cycles between the cytoplasmic-open state (c-state) and the matrix-open state (m-state): operates by the alternating access mechanism with a single substrate-binding site intermittently exposed to either the cytosolic (c-state) or matrix (m-state) side of the inner mitochondrial membrane. In addition to its ADP:ATP antiporter activity, also involved in mitochondrial uncoupling and mitochondrial permeability transition pore (mPTP) activity. Plays a role in mitochondrial uncoupling by acting as a proton transporter: proton transport uncouples the proton flows via the electron transport chain and ATP synthase to reduce the efficiency of ATP production and cause mitochondrial thermogenesis. Proton transporter activity is inhibited by ADP:ATP antiporter activity, suggesting that SLC25A5/ANT2 acts as a master regulator of mitochondrial energy output by maintaining a delicate balance between ATP production (ADP:ATP antiporter activity) and thermogenesis (proton transporter activity). Proton transporter activity requires free fatty acids as cofactor, but does not transport it. Probably mediates mitochondrial uncoupling in tissues that do not express UCP1. Also plays a key role in mPTP opening, a non-specific pore that enables free passage of the mitochondrial membranes to solutes of up to 1.5 kDa, and which contributes to cell death. It is however unclear if SLC25A5/ANT2 constitutes a pore-forming component of mPTP or regulates it. Acts as a regulator of mitophagy independently of ADP:ATP antiporter activity: promotes mitophagy via interaction with TIMM44, leading to inhibit the presequence translocase TIMM23, thereby promoting stabilization of PINK1. As part of the mitotic spindle-associated MMXD complex it may play a role in chromosome segregation. The chain is ADP/ATP translocase 2 from Bos taurus (Bovine).